Consider the following 358-residue polypeptide: uncharacterized protein (358 aa).

Belongs to the serpin family. Poxviruses subfamily.

This is an uncharacterized protein from Fowlpox virus (strain NVSL) (FPV).